A 766-amino-acid chain; its full sequence is Subtilisin-like protease SBT3.13 (766 aa).

The first 21 residues, 1-21 (MNNSLQSSKLVLLLAIALVLF), serve as a signal peptide directing secretion. Residues 22 to 120 (LNTELDFLTA…VIPNRIRKLK (99 aa)) constitute a propeptide, activation peptide. Positions 41-119 (VYIVYLGERE…HVIPNRIRKL (79 aa)) constitute an Inhibitor I9 domain. A Peptidase S8 domain is found at 134 to 618 (PTSFSSLSSV…GGLVNPEKAA (485 aa)). Asp-162 (charge relay system) is an active-site residue. 2 N-linked (GlcNAc...) asparagine glycosylation sites follow: Asn-195 and Asn-223. His-239 serves as the catalytic Charge relay system. N-linked (GlcNAc...) asparagine glycosylation is found at Asn-254 and Asn-389. Residue Ser-549 is the Charge relay system of the active site. The N-linked (GlcNAc...) asparagine glycan is linked to Asn-641.

This sequence belongs to the peptidase S8 family.

It is found in the secreted. The chain is Subtilisin-like protease SBT3.13 from Arabidopsis thaliana (Mouse-ear cress).